The primary structure comprises 256 residues: Imidazole glycerol phosphate synthase subunit HisF (256 aa).

Catalysis depends on residues Asp12 and Asp131.

Belongs to the HisA/HisF family. In terms of assembly, heterodimer of HisH and HisF.

It is found in the cytoplasm. The enzyme catalyses 5-[(5-phospho-1-deoxy-D-ribulos-1-ylimino)methylamino]-1-(5-phospho-beta-D-ribosyl)imidazole-4-carboxamide + L-glutamine = D-erythro-1-(imidazol-4-yl)glycerol 3-phosphate + 5-amino-1-(5-phospho-beta-D-ribosyl)imidazole-4-carboxamide + L-glutamate + H(+). It functions in the pathway amino-acid biosynthesis; L-histidine biosynthesis; L-histidine from 5-phospho-alpha-D-ribose 1-diphosphate: step 5/9. Functionally, IGPS catalyzes the conversion of PRFAR and glutamine to IGP, AICAR and glutamate. The HisF subunit catalyzes the cyclization activity that produces IGP and AICAR from PRFAR using the ammonia provided by the HisH subunit. The polypeptide is Imidazole glycerol phosphate synthase subunit HisF (Bifidobacterium adolescentis (strain ATCC 15703 / DSM 20083 / NCTC 11814 / E194a)).